We begin with the raw amino-acid sequence, 309 residues long: Porphobilinogen deaminase (309 aa).

Cys-244 is modified (S-(dipyrrolylmethanemethyl)cysteine).

Belongs to the HMBS family. In terms of assembly, monomer. Requires dipyrromethane as cofactor.

It carries out the reaction 4 porphobilinogen + H2O = hydroxymethylbilane + 4 NH4(+). It participates in porphyrin-containing compound metabolism; protoporphyrin-IX biosynthesis; coproporphyrinogen-III from 5-aminolevulinate: step 2/4. Tetrapolymerization of the monopyrrole PBG into the hydroxymethylbilane pre-uroporphyrinogen in several discrete steps. The polypeptide is Porphobilinogen deaminase (Listeria monocytogenes serotype 4b (strain CLIP80459)).